Consider the following 458-residue polypeptide: Type III intermediate filament (458 aa).

Positions 1–100 (MEKGYKMNRS…KVNRTNEKAE (100 aa)) are head. In terms of domain architecture, IF rod spans 97 to 405 (EKAEMIELND…KLLEGEENRI (309 aa)). The tail stretch occupies residues 406–458 (SMPLPSFGSMSLSDAMFEQQPFENRTSKKKIVIKTVETSGGDVISETTQKIED).

Belongs to the intermediate filament family.

This is Type III intermediate filament from Tetronarce californica (Pacific electric ray).